We begin with the raw amino-acid sequence, 212 residues long: Tetraspanin-31-B (212 aa).

At 1 to 12 the chain is on the cytoplasmic side; the sequence is MVCGGFTCSKNA. Residues 13 to 33 traverse the membrane as a helical segment; sequence LCALNVVYMLVGVLLIIVAAW. Residues 34-44 lie on the Extracellular side of the membrane; it reads GKGFGIVSSIH. The chain crosses the membrane as a helical span at residues 45 to 65; it reads IIGGVIAIGVFLLLIAIIGLI. At 66 to 72 the chain is on the cytoplasmic side; the sequence is GAVSHHQ. A helical membrane pass occupies residues 73–93; sequence VMLFIYMVVLILVFIFQFIVS. At 94 to 175 the chain is on the extracellular side; sequence CSCLAMNRSQ…MLNHADEALK (82 aa). N-linked (GlcNAc...) asparagine glycans are attached at residues asparagine 100, asparagine 109, asparagine 117, and asparagine 134. The helical transmembrane segment at 176–196 threads the bilayer; sequence ILGGVGLFFSFTEILGVWLAF. Over 197–212 the chain is Cytoplasmic; the sequence is RYRNQKDPRANPSAFL.

It belongs to the tetraspanin (TM4SF) family.

It is found in the membrane. This is Tetraspanin-31-B (tspan31-b) from Xenopus laevis (African clawed frog).